The primary structure comprises 61 residues: Sec-independent protein translocase protein TatA (61 aa).

Residues 2–22 (GLSGISPLSLLLILAIIVALF) form a helical membrane-spanning segment.

The protein belongs to the TatA/E family. The Tat system comprises two distinct complexes: a TatABC complex, containing multiple copies of TatA, TatB and TatC subunits, and a separate TatA complex, containing only TatA subunits. Substrates initially bind to the TatABC complex, which probably triggers association of the separate TatA complex to form the active translocon.

The protein resides in the cell inner membrane. In terms of biological role, part of the twin-arginine translocation (Tat) system that transports large folded proteins containing a characteristic twin-arginine motif in their signal peptide across membranes. TatA could form the protein-conducting channel of the Tat system. The protein is Sec-independent protein translocase protein TatA of Legionella pneumophila (strain Paris).